Consider the following 570-residue polypeptide: Urease subunit alpha (570 aa).

Residues 135-570 enclose the Urease domain; the sequence is GGLDIHIHFN…ELPLAKRYSL (436 aa). Ni(2+) contacts are provided by His-140, His-142, and Lys-219. At Lys-219 the chain carries N6-carboxylysine. His-221 provides a ligand contact to substrate. Residues His-248 and His-274 each coordinate Ni(2+). His-322 serves as the catalytic Proton donor. Asp-362 is a binding site for Ni(2+).

The protein belongs to the metallo-dependent hydrolases superfamily. Urease alpha subunit family. Heterotrimer of UreA (gamma), UreB (beta) and UreC (alpha) subunits. Three heterotrimers associate to form the active enzyme. It depends on Ni cation as a cofactor. Carboxylation allows a single lysine to coordinate two nickel ions.

Its subcellular location is the cytoplasm. The catalysed reaction is urea + 2 H2O + H(+) = hydrogencarbonate + 2 NH4(+). It participates in nitrogen metabolism; urea degradation; CO(2) and NH(3) from urea (urease route): step 1/1. This Haloquadratum walsbyi (strain DSM 16790 / HBSQ001) protein is Urease subunit alpha.